We begin with the raw amino-acid sequence, 5588 residues long: Histone-lysine N-methyltransferase 2D (5588 aa).

The disordered stretch occupies residues Met1–Gly61. Residues Gly104–Val149 form a C2HC pre-PHD-type 1; degenerate zinc finger. 2 consecutive PHD-type zinc fingers follow at residues Gln170 to Ser218 and Cys270 to Cys323. A PHD-type 2; degenerate zinc finger spans residues Glu226–Cys276. Residues Cys229–Lys274 form an RING-type 1; atypical zinc finger. An RING-type 2; degenerate zinc finger spans residues Cys276–Arg321. Disordered stretches follow at residues Met438–Ile908 and Leu922–Thr1315. Positions Pro439–Glu642 are 15 X 5 AA repeats of S/P-P-P-E/P-E/A. The segment covering Leu440–Glu463 has biased composition (pro residues). 4 tandem repeats follow at residues Pro442–Glu446, Pro460–Ala464, Pro469–Glu473, and Ser477–Glu481. Over residues Ala464–Pro475 the composition is skewed to low complexity. 2 stretches are compositionally biased toward pro residues: residues Gly490–Pro512 and Leu519–Glu560. 4 consecutive repeat copies span residues Ser520–Glu524, Ser529–Glu533, Ser538–Glu542, and Ser547–Glu551. The span at Ala561–Pro572 shows a compositional bias: low complexity. A compositionally biased stretch (pro residues) spans Leu573 to Glu614. A run of 4 repeats spans residues Ser574–Glu578, Ser583–Glu587, Ser592–Glu596, and Ser610–Glu614. Residues Leu619–Leu636 show a composition bias toward low complexity. Repeat unit 15 spans residues Ser637–Glu641. A compositionally biased stretch (pro residues) spans Ser637 to Glu677. A compositionally biased stretch (low complexity) spans Asp696 to Pro712. Phosphoserine is present on Ser727. 3 stretches are compositionally biased toward low complexity: residues Leu735–Pro755, Pro836–Ser851, and Leu876–Gln893. Pro residues-rich tracts occupy residues Leu894–Ile908, Glu959–Pro973, and Leu985–Leu1012. Residues Pro1013–Val1023 show a composition bias toward low complexity. The segment covering Ala1033–Glu1045 has biased composition (basic and acidic residues). PHD-type zinc fingers lie at residues Pro1071–Val1124, Pro1121–Asp1171, and Leu1198–Arg1253. Phosphoserine is present on Ser1107. Polar residues predominate over residues Glu1163 to Ala1172. The RING-type 3; atypical zinc-finger motif lies at Ser1201–Pro1251. Position 1205 is a phosphoserine (Ser1205). Thr1223 carries the post-translational modification Phosphothreonine. Ser1226 carries the phosphoserine modification. A compositionally biased stretch (basic residues) spans Gly1245–Gln1258. Ser1562 bears the Phosphoserine mark. Disordered regions lie at residues Lys1566–Glu1721, Gly1751–Lys1846, Gly1886–Arg1962, and Ser2095–Arg2641. The span at Pro1593–Lys1608 shows a compositional bias: basic and acidic residues. Ser1627 is modified (phosphoserine). The segment covering Glu1631–Lys1641 has biased composition (basic and acidic residues). Basic residues-rich tracts occupy residues Arg1658 to Arg1668 and Lys1709 to Ser1718. The segment covering Pro1762–Asp1782 has biased composition (basic and acidic residues). Phosphoserine is present on Ser1791. At Thr1822 the chain carries Phosphothreonine. Residues Asp1831–Lys1846 show a composition bias toward basic and acidic residues. 2 stretches are compositionally biased toward low complexity: residues Gly1886 to Ser1896 and Thr1936 to Glu1947. Positions Pro2151–Pro2166 are enriched in pro residues. The span at Gly2170–Gly2181 shows a compositional bias: low complexity. Ser2196 carries the phosphoserine modification. Phosphothreonine is present on Thr2197. At Lys2203 the chain carries N6-acetyllysine. Phosphoserine is present on residues Ser2217 and Ser2231. The span at Glu2237–Leu2249 shows a compositional bias: basic and acidic residues. Residues Ser2266, Ser2268, and Ser2299 each carry the phosphoserine modification. Composition is skewed to pro residues over residues Glu2308–His2322 and Tyr2331–Ser2359. Low complexity predominate over residues Ser2366–Ser2388. The segment covering Gly2470–Gly2486 has biased composition (polar residues). At Arg2492 the chain carries Asymmetric dimethylarginine. Positions Leu2504–Pro2514 are enriched in pro residues. Low complexity predominate over residues Pro2546–Pro2557. Position 2597 is a phosphoserine (Ser2597). The segment covering Ser2610–Ala2622 has biased composition (low complexity). Positions Ile2627–Ala2665 form a coiled coil. Residues Leu2644 to Leu2648 carry the LXXLL motif 1 motif. Positions Arg2655–Gln2806 are disordered. Over residues Ala2665–Ala2680 the composition is skewed to low complexity. Polar residues-rich tracts occupy residues Ser2691 to Ser2704 and Pro2739 to Gln2748. A coiled-coil region spans residues Leu2768–Ala2813. Positions Gln2769–Gln2806 are enriched in low complexity. Arg2829 is modified (asymmetric dimethylarginine). An LXXLL motif 2 motif is present at residues Leu3030–Leu3034. The tract at residues Asn3069–Thr3104 is disordered. At Lys3071 the chain carries N6-acetyllysine. Ser3122 and Ser3193 each carry phosphoserine. Disordered stretches follow at residues Asn3129 to Ser3193 and Gln3271 to Val3326. Residues Gln3271 to Gln3284 show a composition bias toward low complexity. Position 3430 is an N6-acetyllysine (Lys3430). Disordered stretches follow at residues Ser3460–Gln3496, Arg3593–Val3617, Leu3633–Val3661, and Gln3678–Leu3704. A coiled-coil region spans residues Glu3559–Ala3613. Residues Gln3596 to Gln3610 show a composition bias toward low complexity. A coiled-coil region spans residues Arg3712 to His3747. Arg3725 carries the asymmetric dimethylarginine modification. Disordered stretches follow at residues Pro3760–His3780 and Leu3808–His3827. 2 coiled-coil regions span residues Arg3854–Gln3883 and Ser3912–Leu4052. Residues Gly4053 to Pro4249 are disordered. 3 stretches are compositionally biased toward low complexity: residues Ser4128 to Gln4159, Gly4172 to Ser4183, and Gly4226 to Gln4240. Asymmetric dimethylarginine is present on Arg4255. A Phosphoserine modification is found at Ser4272. The LXXLL motif 3 motif lies at Leu4279–Leu4283. Residues Gln4290–Gln4452 are disordered. Residues Val4294–Thr4305 show a composition bias toward polar residues. The segment covering Pro4307–Gly4322 has biased composition (low complexity). The short motif at Leu4310–Leu4314 is the LXXLL motif 4 element. The span at Gln4379–His4391 shows a compositional bias: polar residues. Residue Ser4410 is modified to Phosphoserine. A compositionally biased stretch (polar residues) spans Asp4432 to Leu4445. Residues Leu4514–Leu4518 carry the LXXLL motif 5 motif. Lys4516 bears the N6-acetyllysine mark. 3 disordered regions span residues Leu4553–Val4596, Lys4664–Leu4716, and Ala4729–Ser4778. Over residues Pro4670 to Ser4684 the composition is skewed to pro residues. Ser4789 carries the post-translational modification Phosphoserine. Residue Lys4807 forms a Glycyl lysine isopeptide (Lys-Gly) (interchain with G-Cter in SUMO2) linkage. Lys4827 is subject to N6-acetyllysine. The RING-type 4; degenerate zinc-finger motif lies at Lys4829–Pro4874. The segment at Ala4877–Leu4908 is disordered. Over residues Leu4879–Leu4896 the composition is skewed to basic and acidic residues. A Glycyl lysine isopeptide (Lys-Gly) (interchain with G-Cter in SUMO2) cross-link involves residue Lys4931. A disordered region spans residues Gln4956 to Lys5031. Over residues Ala4959 to Glu4982 the composition is skewed to pro residues. Residues Arg5017–Pro5027 are compositionally biased toward basic and acidic residues. The LXXLL motif 6 signature appears at Leu5041–Leu5045. The C2HC pre-PHD-type 2 zinc finger occupies Asn5080 to Val5120. The segment at Thr5141 to Lys5188 adopts a PHD-type 7 zinc-finger fold. One can recognise an FYR N-terminal domain in the interval Leu5226–Asn5286. Residues Asn5287–Tyr5372 form the FYR C-terminal domain. The WDR5 interaction motif (WIN) motif lies at Gly5388–Glu5393. The 117-residue stretch at Asn5448 to Gln5564 folds into the SET domain. S-adenosyl-L-methionine is bound by residues Tyr5502 and Asn5525–His5526. Residues Cys5528, Cys5576, Cys5578, and Cys5583 each coordinate Zn(2+). Residues His5572–Asn5588 form the Post-SET domain.

This sequence belongs to the class V-like SAM-binding methyltransferase superfamily. Histone-lysine methyltransferase family. TRX/MLL subfamily. Component of the MLL2 complex (also named ASCOM complex), at least composed of catalytic subunit KMT2D/MLL2, ASH2L, RBBP5, WDR5, NCOA6, DPY30, KDM6A, PAXIP1/PTIP, PAGR1 and alpha- and beta-tubulin. Forms a core complex with the evolutionary conserved subcomplex WRAD composed of WDR5, RBBP5, ASH2L/ASH2 and DPY30 subunits; WRAD differentially stimulates the methyltransferase activity. Interacts with ESR1; interaction is direct. Interacts (via WIN motif) with WDR5.

It localises to the nucleus. The enzyme catalyses L-lysyl(4)-[histone H3] + S-adenosyl-L-methionine = N(6)-methyl-L-lysyl(4)-[histone H3] + S-adenosyl-L-homocysteine + H(+). Its function is as follows. Histone methyltransferase that catalyzes methyl group transfer from S-adenosyl-L-methionine to the epsilon-amino group of 'Lys-4' of histone H3 (H3K4). Part of chromatin remodeling machinery predominantly forms H3K4me1 methylation marks at active chromatin sites where transcription and DNA repair take place. Acts as a coactivator for estrogen receptor by being recruited by ESR1, thereby activating transcription. This is Histone-lysine N-methyltransferase 2D (Kmt2d) from Mus musculus (Mouse).